We begin with the raw amino-acid sequence, 644 residues long: Zinc finger protein 568 (644 aa).

One can recognise a KRAB domain in the interval Val48–Pro119. C2H2-type zinc fingers lie at residues Phe222 to His244, Tyr250 to His272, Tyr278 to His300, Tyr306 to His328, Tyr334 to His356, Tyr362 to His384, Tyr390 to His412, Tyr418 to His440, Tyr446 to His468, Tyr474 to His496, Tyr502 to His524, Tyr530 to His552, Phe558 to His580, Tyr586 to His608, and Phe614 to His636.

It belongs to the krueppel C2H2-type zinc-finger protein family. Interacts with TRIM28.

It localises to the nucleus. Has transcriptional repression activity, partially through the recruitment of the corepressor TRIM28 but also has repression activity independently of this interaction. Essential during embryonic development, where it acts as a direct repressor of a placental-specific transcript of IGF2 in early development and regulates convergent extension movements required for axis elongation and tissue morphogenesis in all germ layers. Also important for normal morphogenesis of extraembryonic tissues including the yolk sac, extraembryonic mesoderm and placenta. May enhance proliferation or maintenance of neural stem cells. This Homo sapiens (Human) protein is Zinc finger protein 568 (ZNF568).